Reading from the N-terminus, the 184-residue chain is Ribonuclease HII (184 aa).

The 183-residue stretch at 2–184 (AKICGIDEAG…KPKLAQSSLF (183 aa)) folds into the RNase H type-2 domain. A divalent metal cation contacts are provided by Asp-8, Glu-9, and Asp-95.

This sequence belongs to the RNase HII family. Requires Mn(2+) as cofactor. Mg(2+) is required as a cofactor.

It is found in the cytoplasm. The enzyme catalyses Endonucleolytic cleavage to 5'-phosphomonoester.. Endonuclease that specifically degrades the RNA of RNA-DNA hybrids. The chain is Ribonuclease HII from Campylobacter concisus (strain 13826).